Reading from the N-terminus, the 289-residue chain is 2-dehydro-3-deoxyphosphooctonate aldolase (289 aa).

Belongs to the KdsA family.

The protein resides in the cytoplasm. It catalyses the reaction D-arabinose 5-phosphate + phosphoenolpyruvate + H2O = 3-deoxy-alpha-D-manno-2-octulosonate-8-phosphate + phosphate. The protein operates within carbohydrate biosynthesis; 3-deoxy-D-manno-octulosonate biosynthesis; 3-deoxy-D-manno-octulosonate from D-ribulose 5-phosphate: step 2/3. It functions in the pathway bacterial outer membrane biogenesis; lipopolysaccharide biosynthesis. This chain is 2-dehydro-3-deoxyphosphooctonate aldolase, found in Cupriavidus necator (strain ATCC 17699 / DSM 428 / KCTC 22496 / NCIMB 10442 / H16 / Stanier 337) (Ralstonia eutropha).